The sequence spans 353 residues: MDLQASLLSTGPNASNISDGQDNFTLAGPPPRTRSVSYINIIMPSVFGTICLLGIVGNSTVIFAVVKKSKLHWCSNVPDIFIINLSVVDLLFLLGMPFMIHQLMGNGVWHFGETMCTLITAMDANSQFTSTYILTAMAIDRYLATVHPISSTKFRKPSMATLVICLLWALSFISITPVWLYARLIPFPGGAVGCGIRLPNPDTDLYWFTLYQFFLAFALPFVVITAAYVKILQRMTSSVAPASQRSIRLRTKRVTRTAIAICLVFFVCWAPYYVLQLTQLSISRPTLTFVYLYNAAISLGYANSCLNPFVYIVLCETFRKRLVLSVKPAAQGQLRTVSNAQTADEERTESKGT.

The Extracellular segment spans residues 1–45 (MDLQASLLSTGPNASNISDGQDNFTLAGPPPRTRSVSYINIIMPS). N-linked (GlcNAc...) asparagine glycans are attached at residues Asn13, Asn16, and Asn23. The chain crosses the membrane as a helical span at residues 46–66 (VFGTICLLGIVGNSTVIFAVV). At 67–79 (KKSKLHWCSNVPD) the chain is on the cytoplasmic side. Residues 80–100 (IFIINLSVVDLLFLLGMPFMI) traverse the membrane as a helical segment. Over 101 to 116 (HQLMGNGVWHFGETMC) the chain is Extracellular. A disulfide bridge links Cys116 with Cys194. The helical transmembrane segment at 117-139 (TLITAMDANSQFTSTYILTAMAI) threads the bilayer. Over 140–161 (DRYLATVHPISSTKFRKPSMAT) the chain is Cytoplasmic. The helical transmembrane segment at 162–182 (LVICLLWALSFISITPVWLYA) threads the bilayer. Topologically, residues 183–204 (RLIPFPGGAVGCGIRLPNPDTD) are extracellular. The chain crosses the membrane as a helical span at residues 205–225 (LYWFTLYQFFLAFALPFVVIT). The Cytoplasmic segment spans residues 226–256 (AAYVKILQRMTSSVAPASQRSIRLRTKRVTR). Residues 257 to 277 (TAIAICLVFFVCWAPYYVLQL) traverse the membrane as a helical segment. At 278-294 (TQLSISRPTLTFVYLYN) the chain is on the extracellular side. The helical transmembrane segment at 295-315 (AAISLGYANSCLNPFVYIVLC) threads the bilayer. Topologically, residues 316-353 (ETFRKRLVLSVKPAAQGQLRTVSNAQTADEERTESKGT) are cytoplasmic.

Belongs to the G-protein coupled receptor 1 family. As to quaternary structure, interacts with NCDN. In terms of tissue distribution, expressed predominantly in the brain. Expression in brain is negatively regulated by leptin. Also found in the epithelium of the tongue and kidney.

It localises to the cell membrane. Receptor for melanin-concentrating hormone, coupled to both G proteins that inhibit adenylyl cyclase and G proteins that activate phosphoinositide hydrolysis. The sequence is that of Melanin-concentrating hormone receptor 1 from Mus musculus (Mouse).